The primary structure comprises 263 residues: ATP synthase subunit delta (263 aa).

It belongs to the ATPase delta chain family. In terms of assembly, F-type ATPases have 2 components, F(1) - the catalytic core - and F(0) - the membrane proton channel. F(1) has five subunits: alpha(3), beta(3), gamma(1), delta(1), epsilon(1). F(0) has three main subunits: a(1), b(2) and c(10-14). The alpha and beta chains form an alternating ring which encloses part of the gamma chain. F(1) is attached to F(0) by a central stalk formed by the gamma and epsilon chains, while a peripheral stalk is formed by the delta and b chains.

The protein localises to the cell membrane. Functionally, f(1)F(0) ATP synthase produces ATP from ADP in the presence of a proton or sodium gradient. F-type ATPases consist of two structural domains, F(1) containing the extramembraneous catalytic core and F(0) containing the membrane proton channel, linked together by a central stalk and a peripheral stalk. During catalysis, ATP synthesis in the catalytic domain of F(1) is coupled via a rotary mechanism of the central stalk subunits to proton translocation. In terms of biological role, this protein is part of the stalk that links CF(0) to CF(1). It either transmits conformational changes from CF(0) to CF(1) or is implicated in proton conduction. The chain is ATP synthase subunit delta from Leifsonia xyli subsp. xyli (strain CTCB07).